Consider the following 383-residue polypeptide: Succinyl-diaminopimelate desuccinylase (383 aa).

His-70 contacts Zn(2+). Asp-72 is a catalytic residue. Asp-103 is a binding site for Zn(2+). The active-site Proton acceptor is Glu-137. Zn(2+)-binding residues include Glu-138, Glu-166, and His-352.

It belongs to the peptidase M20A family. DapE subfamily. Homodimer. Zn(2+) is required as a cofactor. The cofactor is Co(2+).

The enzyme catalyses N-succinyl-(2S,6S)-2,6-diaminopimelate + H2O = (2S,6S)-2,6-diaminopimelate + succinate. The protein operates within amino-acid biosynthesis; L-lysine biosynthesis via DAP pathway; LL-2,6-diaminopimelate from (S)-tetrahydrodipicolinate (succinylase route): step 3/3. Catalyzes the hydrolysis of N-succinyl-L,L-diaminopimelic acid (SDAP), forming succinate and LL-2,6-diaminopimelate (DAP), an intermediate involved in the bacterial biosynthesis of lysine and meso-diaminopimelic acid, an essential component of bacterial cell walls. This chain is Succinyl-diaminopimelate desuccinylase, found in Hahella chejuensis (strain KCTC 2396).